The primary structure comprises 119 residues: Ribosome-binding factor A (119 aa).

It belongs to the RbfA family. Monomer. Binds 30S ribosomal subunits, but not 50S ribosomal subunits or 70S ribosomes.

It is found in the cytoplasm. In terms of biological role, one of several proteins that assist in the late maturation steps of the functional core of the 30S ribosomal subunit. Associates with free 30S ribosomal subunits (but not with 30S subunits that are part of 70S ribosomes or polysomes). Required for efficient processing of 16S rRNA. May interact with the 5'-terminal helix region of 16S rRNA. The sequence is that of Ribosome-binding factor A from Mycoplasmoides gallisepticum (strain R(low / passage 15 / clone 2)) (Mycoplasma gallisepticum).